The primary structure comprises 281 residues: Insulin-like growth factor-binding protein 2 (281 aa).

The signal sequence occupies residues 1–21; the sequence is MVLSEHLLVLLGAVLCAPALS. The region spanning 23-106 is the IGFBP N-terminal domain; that stretch reads VLFRCPPCSP…VLGLGTCGKR (84 aa). Disulfide bonds link Cys27–Cys56, Cys30–Cys58, Cys38–Cys59, Cys47–Cys62, Cys70–Cys83, and Cys77–Cys103. 2 disordered regions span residues 107–127 and 139–180; these read RDAEYGSSQERGTELPEDQSD and PAVP…RPAR. The span at 156–176 shows a compositional bias: basic and acidic residues; the sequence is VNRERANEQHRSKTNKSEDKK. Residues 180–262 form the Thyroglobulin type-1 domain; that stretch reads RSLCQLQLDQ…SPTVRGDPEC (83 aa). 3 disulfides stabilise this stretch: Cys183–Cys217, Cys228–Cys239, and Cys241–Cys262. The Cell attachment site motif lies at 257-259; sequence RGD.

As to quaternary structure, interacts with igf1 and igf2.

Its subcellular location is the secreted. Its function is as follows. IGF-binding proteins prolong the half-life of the IGFs and have been shown to either inhibit or stimulate the growth promoting effects of the IGFs on cell culture. They alter the interaction of IGFs with their cell surface receptors. This chain is Insulin-like growth factor-binding protein 2 (igfbp2), found in Xenopus laevis (African clawed frog).